Here is a 1077-residue protein sequence, read N- to C-terminus: Eukaryotic translation initiation factor 2-alpha kinase pek-1 (1077 aa).

Positions 1–23 (MSVYYIVLAGFLLFMALVPFNAG) are cleaved as a signal peptide. The Lumenal segment spans residues 24–453 (QQYIDDDIEV…ITLMQTIFSY (430 aa)). N-linked (GlcNAc...) asparagine glycosylation is present at Asn206. The chain crosses the membrane as a helical span at residues 454-474 (IFNPTAVVSFLAGLIGVTVAV). Residues 475–1077 (VYNKIAKSSP…HEVATHKFLQ (603 aa)) lie on the Cytoplasmic side of the membrane. In terms of domain architecture, Protein kinase spans 604 to 1076 (FEVKKVIGHG…AHEVATHKFL (473 aa)). ATP is bound by residues 610 to 618 (IGHGGFGVV) and Lys633. The segment at 727 to 834 (MPPVVGNTTD…FVDGSDDVDN (108 aa)) is disordered. Residues 732-746 (GNTTDAENSWSTSAK) are compositionally biased toward polar residues. Basic and acidic residues predominate over residues 766-778 (GSDRTTAELKEES). The segment covering 783–796 (ESDEESDTTEDSSS) has biased composition (acidic residues). Residues 797 to 808 (SDESPSSSSGSS) show a composition bias toward low complexity. Residue Asp933 is the Proton acceptor of the active site.

It belongs to the protein kinase superfamily. Ser/Thr protein kinase family. GCN2 subfamily. As to quaternary structure, forms dimers with HSPA5/BIP in resting cells. Oligomerizes in ER-stressed cells. Autophosphorylated. In terms of processing, N-glycosylated. As to expression, expressed in intestinal cells.

The protein resides in the endoplasmic reticulum membrane. It carries out the reaction L-seryl-[protein] + ATP = O-phospho-L-seryl-[protein] + ADP + H(+). It catalyses the reaction L-threonyl-[protein] + ATP = O-phospho-L-threonyl-[protein] + ADP + H(+). Its activity is regulated as follows. Perturbation in protein folding in the endoplasmic reticulum (ER) promotes reversible dissociation from HSPA5/BIP and oligomerization, resulting in transautophosphorylation and kinase activity induction. Functionally, phosphorylates the alpha subunit of eukaryotic translation-initiation factor 2 (eIF2alpha), leading to its inactivation and thus to a rapid reduction of translational initiation and repression of global protein synthesis. May phosphorylate eIF2alpha during hypoxia. Proposed to have a role in alleviating endoplasmic reticulum stress. This Caenorhabditis elegans protein is Eukaryotic translation initiation factor 2-alpha kinase pek-1 (pek-1).